The primary structure comprises 303 residues: Acetylglutamate kinase (303 aa).

Residues 69–70 (GG), Arg91, and Asn190 each bind substrate.

Belongs to the acetylglutamate kinase family. ArgB subfamily.

It localises to the cytoplasm. The enzyme catalyses N-acetyl-L-glutamate + ATP = N-acetyl-L-glutamyl 5-phosphate + ADP. It participates in amino-acid biosynthesis; L-arginine biosynthesis; N(2)-acetyl-L-ornithine from L-glutamate: step 2/4. Catalyzes the ATP-dependent phosphorylation of N-acetyl-L-glutamate. The chain is Acetylglutamate kinase from Nocardia farcinica (strain IFM 10152).